The primary structure comprises 143 residues: Endoribonuclease YbeY (143 aa).

The Zn(2+) site is built by His-109, His-113, and His-119.

The protein belongs to the endoribonuclease YbeY family. Zn(2+) is required as a cofactor.

The protein resides in the cytoplasm. Its function is as follows. Single strand-specific metallo-endoribonuclease involved in late-stage 70S ribosome quality control and in maturation of the 3' terminus of the 16S rRNA. In Carboxydothermus hydrogenoformans (strain ATCC BAA-161 / DSM 6008 / Z-2901), this protein is Endoribonuclease YbeY.